Here is a 187-residue protein sequence, read N- to C-terminus: Elongation factor P (187 aa).

This sequence belongs to the elongation factor P family.

The protein resides in the cytoplasm. Its pathway is protein biosynthesis; polypeptide chain elongation. Involved in peptide bond synthesis. Stimulates efficient translation and peptide-bond synthesis on native or reconstituted 70S ribosomes in vitro. Probably functions indirectly by altering the affinity of the ribosome for aminoacyl-tRNA, thus increasing their reactivity as acceptors for peptidyl transferase. The sequence is that of Elongation factor P from Nocardia farcinica (strain IFM 10152).